We begin with the raw amino-acid sequence, 490 residues long: Cytochrome P450 2W1 (490 aa).

Residues 1 to 22 (MALLLLLFLGLLGLWGLLCACA) form the signal peptide. Residue Asn177 is glycosylated (N-linked (GlcNAc...) asparagine). Cys433 serves as a coordination point for heme.

The protein belongs to the cytochrome P450 family. Heme serves as cofactor. As to expression, very low levels are detected in fetal and adult tissues. Highly expressed in several tumor samples, in particular colon and adrenal tumors.

It localises to the endoplasmic reticulum lumen. The protein resides in the cell membrane. Its subcellular location is the microsome membrane. The enzyme catalyses all-trans-retinoate + reduced [NADPH--hemoprotein reductase] + O2 = all-trans-4-hydroxyretinoate + oxidized [NADPH--hemoprotein reductase] + H2O + H(+). It carries out the reaction 1-(9Z-octadecenoyl)-sn-glycero-3-phosphocholine + reduced [NADPH--hemoprotein reductase] + O2 = 1-[8-hydroxy-(9Z)-octadecenoyl]-sn-glycero-3-phosphocholine + oxidized [NADPH--hemoprotein reductase] + H2O + H(+). It catalyses the reaction 1-(9Z-octadecenoyl)-sn-glycero-3-phosphocholine + reduced [NADPH--hemoprotein reductase] + O2 = 1-[11-hydroxy-(9Z)-octadecenoyl]-sn-glycero-3-phosphocholine + oxidized [NADPH--hemoprotein reductase] + H2O + H(+). The catalysed reaction is 1-(9Z-octadecenoyl)-sn-glycero-3-phosphocholine + reduced [NADPH--hemoprotein reductase] + O2 = 1-[(9S,10R)-epoxy-octadecanoyl]-sn-glycero-3-phosphocholine + oxidized [NADPH--hemoprotein reductase] + H2O + H(+). The enzyme catalyses 1-(9Z-octadecenoyl)-sn-glycero-3-phosphocholine + reduced [NADPH--hemoprotein reductase] + O2 = 1-[(9R,10S)-epoxy-octadecanoyl]-sn-glycero-3-phosphocholine + oxidized [NADPH--hemoprotein reductase] + H2O + H(+). In terms of biological role, a cytochrome P450 monooxygenase that may play a role in retinoid and phospholipid metabolism. Catalyzes the hydroxylation of saturated carbon hydrogen bonds. Hydroxylates all trans-retinoic acid (atRA) to 4-hydroxyretinoate and may regulate atRA clearance. Other retinoids such as all-trans retinol and all-trans retinal are potential endogenous substrates. Catalyzes both epoxidation of double bonds and hydroxylation of carbon hydrogen bonds of the fatty acyl chain of 1-acylphospholipids/2-lysophospholipids. Can metabolize various lysophospholipids classes including lysophosphatidylcholines (LPCs), lysophosphatidylinositols (LPIs), lysophosphatidylserines (LPSs), lysophosphatidylglycerols (LPGs), lysophosphatidylethanolamines (LPEs) and lysophosphatidic acids (LPAs). Has low or no activity toward 2-acylphospholipids/1-lysophospholipids, diacylphospholipids and free fatty acids. May play a role in tumorigenesis by activating procarcinogens such as aflatoxin B1, polycyclic aromatic hydrocarbon dihydrodiols and aromatic amines. Mechanistically, uses molecular oxygen inserting one oxygen atom into a substrate, and reducing the second into a water molecule, with two electrons provided by NADPH via cytochrome P450 reductase (CPR; NADPH-ferrihemoprotein reductase). The chain is Cytochrome P450 2W1 from Homo sapiens (Human).